The following is a 412-amino-acid chain: MSPAAAQTAIPLPSTDLPVKIITNGLKNLNYTSKQGYGNFDTHFYDGQDEVSPSGLLKIRKSYREKSKYPDYLPTWDPTEKYGPLEFHEYHDPALRADGNFSNLFAKENVGQLKVKKITPKLGLEINGIQLTDLSDAAKDELALLVAQKGVVVFRNQNFADEGPDYVTEYGRHFGKLHIHQTSGHPQNNPELHITFRRPDAEEFARVFDDSTSSGGWHTDVSYELQPPSYTFFSVVEGPDGGGDTLFADTIEAFDRLSKPLQDFLSTLHVIHSSKEQAENSQRQGGIKRRAPVTHIHPLVRVHPVLKKKCLYVNRAFSRKIVELKRQESESLLNFLYNLVESSHDLQLRAKWEPHSVVIWDNRRVQHSAVIDWEEPIHRHAFRITPQAERPVEDLKFLNDENYYPSSLTLDI.

At Ser52 the chain carries Phosphoserine. Fe cation contacts are provided by His218 and Asp220. Positions 245 and 352 each coordinate 2-oxoglutarate. His367 contributes to the Fe cation binding site. Residues Arg379 and Arg383 each coordinate 2-oxoglutarate.

Belongs to the TfdA dioxygenase family. Fe(2+) serves as cofactor.

It functions in the pathway organosulfur degradation; alkanesulfonate degradation. Acts as an alpha-ketoglutarate-dependent dioxygenase active on sulfonates. Although taurine is a poor substrate, a variety of other sulfonates are utilized, with the best natural substrates being isethionate and taurocholate. This Saccharomyces cerevisiae (strain ATCC 204508 / S288c) (Baker's yeast) protein is Alpha-ketoglutarate-dependent sulfonate dioxygenase (JLP1).